We begin with the raw amino-acid sequence, 277 residues long: Large ribosomal subunit protein uL2 (277 aa).

The segment at 199-277 (DHMNTSVGKA…ILISRHKRKK (79 aa)) is disordered. Residues 209 to 220 (GRTRWMGRRPHN) are compositionally biased toward basic residues.

It belongs to the universal ribosomal protein uL2 family. In terms of assembly, part of the 50S ribosomal subunit. Forms a bridge to the 30S subunit in the 70S ribosome.

One of the primary rRNA binding proteins. Required for association of the 30S and 50S subunits to form the 70S ribosome, for tRNA binding and peptide bond formation. It has been suggested to have peptidyltransferase activity; this is somewhat controversial. Makes several contacts with the 16S rRNA in the 70S ribosome. This is Large ribosomal subunit protein uL2 from Nitrobacter winogradskyi (strain ATCC 25391 / DSM 10237 / CIP 104748 / NCIMB 11846 / Nb-255).